The chain runs to 498 residues: ATP synthase subunit beta, chloroplastic (498 aa).

ATP is bound at residue 172–179 (GGAGVGKT).

This sequence belongs to the ATPase alpha/beta chains family. As to quaternary structure, F-type ATPases have 2 components, CF(1) - the catalytic core - and CF(0) - the membrane proton channel. CF(1) has five subunits: alpha(3), beta(3), gamma(1), delta(1), epsilon(1). CF(0) has four main subunits: a(1), b(1), b'(1) and c(9-12).

The protein resides in the plastid. Its subcellular location is the chloroplast thylakoid membrane. It catalyses the reaction ATP + H2O + 4 H(+)(in) = ADP + phosphate + 5 H(+)(out). Its function is as follows. Produces ATP from ADP in the presence of a proton gradient across the membrane. The catalytic sites are hosted primarily by the beta subunits. In Schisandra sphenanthera (Southern magnolia vine), this protein is ATP synthase subunit beta, chloroplastic.